The sequence spans 377 residues: MHGRLPLTAQTHRRLVVKVGSAVLSGPQGRQHQLAIAAQVAALRAEGREVVLVSSGAQATGMQKLGLTEKPKSMPGKQALAAVGQPTLMLLWEQAFSWYDLKVAQVLLTAEDLAHRHRYLNARQTLETLLEWGIVPIINENDTVMVEEIKFGDNDQLSALIASLVGADLLILLSDIEALYEADPRTHPEAQPIPYVERVDAGVLRMAGDSPNRVGTGGMKSKLLAAEKAQAAGIPHLLLPGTRPQSIAEALQGAPVGTLFAGGQRRYSGRKLWLYQLPKPQGEVVVDAGAAKALRQGGASLLPAGILEVRGQFGVGEAVRCLDEQGNLIGVGLVNYSAAELARIKRRKTREIEALLGYKNTDEAIHRDYFALASELE.

Lysine 18 provides a ligand contact to ATP. Substrate contacts are provided by serine 55, aspartate 142, and asparagine 154. Residues 174 to 175 (SD) and 216 to 222 (TGGMKSK) contribute to the ATP site. In terms of domain architecture, PUA spans 281-359 (QGEVVVDAGA…REIEALLGYK (79 aa)).

It belongs to the glutamate 5-kinase family.

The protein resides in the cytoplasm. The enzyme catalyses L-glutamate + ATP = L-glutamyl 5-phosphate + ADP. Its pathway is amino-acid biosynthesis; L-proline biosynthesis; L-glutamate 5-semialdehyde from L-glutamate: step 1/2. In terms of biological role, catalyzes the transfer of a phosphate group to glutamate to form L-glutamate 5-phosphate. This is Glutamate 5-kinase from Meiothermus ruber.